The primary structure comprises 365 residues: MFEINPVNNRIQDLTERTNVLRGYLDYDAKKERLEEVNAELEQPDVWNEPERAQALGKERSSLEAIVDTLDQMTQGLDDVSGLLELAVEADDEETFNEAVAELNTLEEKLAQLEFRRMFSGEYDSADCYLDIQAGSGGTEAQDWASMLLRMYLRWAEARGFKTEVIEESEGEVAGIKSATIKISGEYAYGWLRTETGVHRLVRKSPFDSGGRRHTSFSSAFVYPEVDDDIDIDINPADLRIDVYRASGAGGQHVNRTESAVRITHIPTGIVTQCQNDRSQHKNKDQAMKQMKAKLYELEMQKKNAEKQAMEDTKSDIGWGSQIRSYVLDDSRIKDLRTGVETRNTQAVLDGSLDQFIEASLKAGL.

Position 252 is an N5-methylglutamine (glutamine 252).

It belongs to the prokaryotic/mitochondrial release factor family. Post-translationally, methylated by PrmC. Methylation increases the termination efficiency of RF2.

The protein localises to the cytoplasm. In terms of biological role, peptide chain release factor 2 directs the termination of translation in response to the peptide chain termination codons UGA and UAA. This is Peptide chain release factor 2 (prfB) from Salmonella typhimurium (strain LT2 / SGSC1412 / ATCC 700720).